The chain runs to 62 residues: Large ribosomal subunit protein bL28 (62 aa).

Residues 1–28 (MARVCAITGRKARSGNSRSHAMNATKRK) form a disordered region.

It belongs to the bacterial ribosomal protein bL28 family.

This chain is Large ribosomal subunit protein bL28, found in Bacillus cytotoxicus (strain DSM 22905 / CIP 110041 / 391-98 / NVH 391-98).